The primary structure comprises 70 residues: MRAIISLLLISAMVFSIIEAVPEEEGLQLSEDERGGCLPHNRFCNALSDPRCCSGLRCKELSIWDSRCLG.

A signal peptide spans 1–20; it reads MRAIISLLLISAMVFSIIEA. A propeptide spanning residues 21 to 34 is cleaved from the precursor; sequence VPEEEGLQLSEDER. Intrachain disulfides connect Cys-37-Cys-53, Cys-44-Cys-58, and Cys-52-Cys-68. Position 69 is a leucine amide (Leu-69).

The protein belongs to the neurotoxin 01 (U2-agtx) family. As to expression, expressed by the venom gland.

Its subcellular location is the secreted. Its function is as follows. Insect active toxin causing rapid but reversible paralysis in crickets. No activity shown in mammals. Does not show effect on mammalian voltage-gated calcium channels. The chain is U2-agatoxin-Ao1l from Agelena orientalis (Funnel-web spider).